Consider the following 562-residue polypeptide: Phosphomethylpyrimidine synthase (562 aa).

Substrate is bound by residues Asn179, Met208, Tyr237, His273, 293–295, 334–337, and Glu373; these read SRG and DGLR. His377 contributes to the Zn(2+) binding site. Tyr400 contributes to the substrate binding site. His441 is a Zn(2+) binding site. Cys521, Cys524, and Cys529 together coordinate [4Fe-4S] cluster.

It belongs to the ThiC family. [4Fe-4S] cluster serves as cofactor.

It carries out the reaction 5-amino-1-(5-phospho-beta-D-ribosyl)imidazole + S-adenosyl-L-methionine = 4-amino-2-methyl-5-(phosphooxymethyl)pyrimidine + CO + 5'-deoxyadenosine + formate + L-methionine + 3 H(+). The protein operates within cofactor biosynthesis; thiamine diphosphate biosynthesis. Its function is as follows. Catalyzes the synthesis of the hydroxymethylpyrimidine phosphate (HMP-P) moiety of thiamine from aminoimidazole ribotide (AIR) in a radical S-adenosyl-L-methionine (SAM)-dependent reaction. The polypeptide is Phosphomethylpyrimidine synthase (Geobacillus kaustophilus (strain HTA426)).